The following is a 411-amino-acid chain: Methylthioribose-1-phosphate isomerase (411 aa).

Ser2 bears the N-acetylserine mark. The Proton donor role is filled by Asp280. Phosphoserine is present on Ser351.

It belongs to the eIF-2B alpha/beta/delta subunits family. MtnA subfamily. Homodimer.

The protein localises to the cytoplasm. The protein resides in the nucleus. It carries out the reaction 5-(methylsulfanyl)-alpha-D-ribose 1-phosphate = 5-(methylsulfanyl)-D-ribulose 1-phosphate. It participates in amino-acid biosynthesis; L-methionine biosynthesis via salvage pathway; L-methionine from S-methyl-5-thio-alpha-D-ribose 1-phosphate: step 1/6. Its function is as follows. Catalyzes the interconversion of methylthioribose-1-phosphate (MTR-1-P) into methylthioribulose-1-phosphate (MTRu-1-P). The polypeptide is Methylthioribose-1-phosphate isomerase (Saccharomyces cerevisiae (strain JAY291) (Baker's yeast)).